Here is a 122-residue protein sequence, read N- to C-terminus: Small ribosomal subunit protein uS13 (122 aa).

The disordered stretch occupies residues 97–122 (PVRGQRTHTNARTRKGPAKAIAGKKK).

Belongs to the universal ribosomal protein uS13 family. In terms of assembly, part of the 30S ribosomal subunit. Forms a loose heterodimer with protein S19. Forms two bridges to the 50S subunit in the 70S ribosome.

Functionally, located at the top of the head of the 30S subunit, it contacts several helices of the 16S rRNA. In the 70S ribosome it contacts the 23S rRNA (bridge B1a) and protein L5 of the 50S subunit (bridge B1b), connecting the 2 subunits; these bridges are implicated in subunit movement. Contacts the tRNAs in the A and P-sites. This is Small ribosomal subunit protein uS13 from Brucella abortus (strain S19).